The following is a 159-amino-acid chain: Transmembrane protein 42 (159 aa).

A run of 4 helical transmembrane segments spans residues 37–57 (FWGV…AASA), 59–79 (LAFG…VMAS), 100–120 (IASV…GYVL), and 124–144 (CQEV…TLIH).

Its subcellular location is the membrane. The chain is Transmembrane protein 42 (TMEM42) from Homo sapiens (Human).